Consider the following 504-residue polypeptide: MTKEKKKTGIEPKVFFPPLIIVGILCWLTVRDLDAANVVINAVFSYVTNVWGWAFEWYMVVMLFGWFWLVFGPYAKKRLGNEPPEFSTASWIFMMFASCTSAAVLFWGSIEIYYYISTPPFALEPNSTGAKELGLAYSLFHWGPLPWATYSFLSVAFAYFFFVRKMDVIRPSSTLVPLVGEKHAKGLFGTIVDNFYLVALIFAMGTSLGLATPLVTECMQWLFGIPHTLQLDAIIITCWIILNAICVACGLQKGVKIASDVRSYLSFLMLGWVFIVSGASFIMNYFTDSVGMLLMYLPRMLFYTDAVGKGGFPQGWTVFYWAWWVIYAIQMSIFLARISRGRTVRELCFGMVMGLTASTWILWTVLGSNTLLLMDKNIINIPNLIEQYGVARAIIETWAALPLSTATMWGFFILCFIATVTLINACSYTLAMSTCREVRDGEEPPLLVRIGWSILVGIIGIVLLALGGLKPIQTAIIAGGCPLFFVNIMVTLSFIKDAKQNWKD.

12 helical membrane passes run 10–30 (IEPKVFFPPLIIVGILCWLTV), 51–71 (WGWAFEWYMVVMLFGWFWLVF), 92–112 (IFMMFASCTSAAVLFWGSIEI), 143–163 (GPLPWATYSFLSVAFAYFFFV), 195–215 (FYLVALIFAMGTSLGLATPLV), 231–251 (LDAIIITCWIILNAICVACGL), 263–283 (SYLSFLMLGWVFIVSGASFIM), 316–336 (WTVFYWAWWVIYAIQMSIFLA), 347–367 (LCFGMVMGLTASTWILWTVLG), 403–423 (LSTATMWGFFILCFIATVTLI), 446–466 (LLVRIGWSILVGIIGIVLLAL), and 475–495 (AIIAGGCPLFFVNIMVTLSFI).

It belongs to the BCCT transporter (TC 2.A.15) family. CaiT subfamily. Homotrimer.

Its subcellular location is the cell inner membrane. The catalysed reaction is 4-(trimethylamino)butanoate(in) + (R)-carnitine(out) = 4-(trimethylamino)butanoate(out) + (R)-carnitine(in). Its pathway is amine and polyamine metabolism; carnitine metabolism. Its function is as follows. Catalyzes the exchange of L-carnitine for gamma-butyrobetaine. This is L-carnitine/gamma-butyrobetaine antiporter from Escherichia fergusonii (strain ATCC 35469 / DSM 13698 / CCUG 18766 / IAM 14443 / JCM 21226 / LMG 7866 / NBRC 102419 / NCTC 12128 / CDC 0568-73).